The following is a 332-amino-acid chain: Protein FAM131B (332 aa).

The interval 1 to 22 is disordered; sequence MDSTSSLHGSSLHRPSTEQTRT. 3 positions are modified to phosphoserine: S47, S114, and S117. A disordered region spans residues 221 to 332; the sequence is LGPAFDDSQP…FDEEEGDANN (112 aa). Basic and acidic residues-rich tracts occupy residues 272-281 and 288-302; these read PVEEEKRPLA and AGCRDLESLSPREDP. A phosphoserine mark is found at S295, S297, and S313. T316 is subject to Phosphothreonine. Phosphoserine is present on residues S317, S318, and S322. The segment covering 323-332 has biased composition (acidic residues); the sequence is FDEEEGDANN.

Belongs to the FAM131 family.

The protein is Protein FAM131B (Fam131b) of Rattus norvegicus (Rat).